We begin with the raw amino-acid sequence, 387 residues long: Succinate--CoA ligase [ADP-forming] subunit beta (387 aa).

The ATP-grasp domain occupies 9 to 236 (KELFAKHNVP…RAATDPLELK (228 aa)). ATP is bound by residues lysine 45, 52 to 54 (GRG), serine 94, and glutamate 99. Residues asparagine 191 and aspartate 205 each coordinate Mg(2+). Substrate contacts are provided by residues asparagine 256 and 318–320 (GIT).

The protein belongs to the succinate/malate CoA ligase beta subunit family. In terms of assembly, heterotetramer of two alpha and two beta subunits. The cofactor is Mg(2+).

The catalysed reaction is succinate + ATP + CoA = succinyl-CoA + ADP + phosphate. It carries out the reaction GTP + succinate + CoA = succinyl-CoA + GDP + phosphate. The protein operates within carbohydrate metabolism; tricarboxylic acid cycle; succinate from succinyl-CoA (ligase route): step 1/1. Its function is as follows. Succinyl-CoA synthetase functions in the citric acid cycle (TCA), coupling the hydrolysis of succinyl-CoA to the synthesis of either ATP or GTP and thus represents the only step of substrate-level phosphorylation in the TCA. The beta subunit provides nucleotide specificity of the enzyme and binds the substrate succinate, while the binding sites for coenzyme A and phosphate are found in the alpha subunit. This is Succinate--CoA ligase [ADP-forming] subunit beta from Mycobacterium tuberculosis (strain CDC 1551 / Oshkosh).